The sequence spans 506 residues: RGLAGRGSVQVPKDCQAGIYLKTLDLRDMVSGFSGIQYEKWITAGIVMPNFKVVIRYPANAFTGITWVMSFDAYNRITSSISTTASPAYTLSVPHWLLHHKNGTTSCDLDYGELCGHAMWFGATTFESPKLHFTCLTGNNKELAADWEFVVELYAEFEAAKSFLGKPNFIYSLDAFNGSLKFLTIPPLEYDLSATSAYKSVSLLLGQTLVDGTHKVYNFNNTLLSYYLGIGGIVKGKVHVCSPCTYGIVLRVVSEWNGVTNNWNQLFKYPGCYIEEDGSFAIEIRSPYHRTPLRLIDAQSASSFTSTLNFYAISGPIAPSGETAKMPVVVQIEEIALPDLSVPSFPNDYFLWVDFSSFTVDVEEYVIGSRFFDISSTTSTVALGDNPFAHMIACHGLHHGILDLKLMWDLEGEFGKSSGGVTITKLCGDKATGMDGASRVCALQNMGCETELYIGNYAGANPNTALSLYSRWLAIKLDKAKSMKMLRILCKPRGNFEFYGRTCFKV.

The protein belongs to the nepoviruses RNA2 polyprotein family. Specific enzymatic cleavages in vivo by the P1 encoded 3C-like protease yield mature proteins.

It is found in the host cell junction. It localises to the host plasmodesma. The protein resides in the virion. In terms of biological role, the movement protein is assembled into tubules that allow the transport of virions from cell to cell. This Beta vulgaris subsp. vulgaris (Beet) protein is RNA2 polyprotein.